Here is an 805-residue protein sequence, read N- to C-terminus: FAD-dependent monooxygenase verC1 (805 aa).

Residues 1–20 form the signal peptide; it reads MTFRVIIVGGGVAGLTLASA. Positions 32, 46, and 107 each coordinate FAD. Asn-132 carries N-linked (GlcNAc...) asparagine glycosylation. Tyr-214 is a catalytic residue. Residues Asp-306 and Ala-319 each contribute to the FAD site. The next 7 membrane-spanning stretches (helical) occupy residues 551–571, 604–624, 632–652, 671–691, 703–723, 726–746, and 761–781; these read ALTM…AGLG, IAVL…AFFW, SWLF…YLFS, LPVI…FWMW, VFFP…VCAI, WDML…IWDL, and IYGV…LGWL.

This sequence belongs to the paxM FAD-dependent monooxygenase family.

The protein resides in the membrane. It functions in the pathway secondary metabolite biosynthesis; terpenoid biosynthesis. Its pathway is mycotoxin biosynthesis. In terms of biological role, FAD-dependent monooxygenase; part of the gene cluster that mediates the biosynthesis of the neurotoxin verrucosidin, a methylated alpha-pyrone polyketide that inhibits oxidative phosphorylation in mitochondria and thereby causes neurological diseases. The carbon backbone of verrucosidin is synthesized by the HR-PKS verA, and further modified by the other verrucodidin cluster enzymes. In Penicillium polonicum, this protein is FAD-dependent monooxygenase verC1.